We begin with the raw amino-acid sequence, 664 residues long: Methionine--tRNA ligase (664 aa).

Positions 13–23 (PYTNGPCHIGH) match the 'HIGH' region motif. Zn(2+)-binding residues include Cys-144, Cys-147, Cys-156, and Cys-160. The 'KMSKS' region motif lies at 327–331 (KFSKS). Lys-330 contacts ATP. One can recognise a tRNA-binding domain in the interval 566–664 (EFGNLDIRIA…RPVKPGTKIR (99 aa)).

Belongs to the class-I aminoacyl-tRNA synthetase family. MetG type 1 subfamily. In terms of assembly, homodimer. Requires Zn(2+) as cofactor.

The protein localises to the cytoplasm. It carries out the reaction tRNA(Met) + L-methionine + ATP = L-methionyl-tRNA(Met) + AMP + diphosphate. Its function is as follows. Is required not only for elongation of protein synthesis but also for the initiation of all mRNA translation through initiator tRNA(fMet) aminoacylation. This Methanoculleus marisnigri (strain ATCC 35101 / DSM 1498 / JR1) protein is Methionine--tRNA ligase.